Reading from the N-terminus, the 339-residue chain is Small ribosomal subunit biogenesis GTPase RsgA (339 aa).

Positions 111–271 (MRGLLKPVAA…LIDSPGIREF (161 aa)) constitute a CP-type G domain. Residues 159–162 (NKAD) and 213–221 (GQSGVGKSS) contribute to the GTP site. Positions 295, 300, 302, and 308 each coordinate Zn(2+).

This sequence belongs to the TRAFAC class YlqF/YawG GTPase family. RsgA subfamily. Monomer. Associates with 30S ribosomal subunit, binds 16S rRNA. It depends on Zn(2+) as a cofactor.

The protein resides in the cytoplasm. Functionally, one of several proteins that assist in the late maturation steps of the functional core of the 30S ribosomal subunit. Helps release RbfA from mature subunits. May play a role in the assembly of ribosomal proteins into the subunit. Circularly permuted GTPase that catalyzes slow GTP hydrolysis, GTPase activity is stimulated by the 30S ribosomal subunit. This chain is Small ribosomal subunit biogenesis GTPase RsgA, found in Pseudomonas aeruginosa (strain UCBPP-PA14).